Here is a 1755-residue protein sequence, read N- to C-terminus: Transposon Ty1-PR1 Gag-Pol polyprotein (1755 aa).

4 stretches are compositionally biased toward polar residues: residues 1–23 (MESQ…SVTS), 48–60 (TKAN…TPAS), 71–93 (SPQT…MMTQ), and 127–152 (QSQF…GNTF). Disordered regions lie at residues 1 to 93 (MESQ…MMTQ), 126 to 173 (PQSQ…RPPP), and 352 to 421 (GSRN…SKST). Over residues 153 to 165 (TDSSSADSDMTST) the composition is skewed to low complexity. The tract at residues 299-401 (NNGIHINNKV…NSKSKTARAH (103 aa)) is RNA-binding. A compositionally biased stretch (low complexity) spans 402–418 (NVSTSNNSPSTDNDSIS). Ser416 carries the phosphoserine modification. The For protease activity; shared with dimeric partner role is filled by Asp461. The interval 583–640 (NVHTSESTRKYPYPFIHRMLAHANAQTIRYSLKNNTITYFNESDVDWSSAIDYQCPDC) is integrase-type zinc finger-like. In terms of domain architecture, Integrase catalytic spans 660–835 (NSYEPFQYLH…AGLDISTLLP (176 aa)). Mg(2+) is bound by residues Asp671 and Asp736. 3 disordered regions span residues 956 to 1087 (SKAV…ETEK), 1092 to 1111 (RSPS…NIVP), and 1130 to 1187 (DLPL…DNET). Residues 960 to 969 (SPTDSTPPST) are compositionally biased toward low complexity. Residues 1005-1015 (STPQISNIEST) show a composition bias toward polar residues. The segment covering 1038–1053 (ESSHASKSKDFRHSDS) has biased composition (basic and acidic residues). Composition is skewed to polar residues over residues 1054-1082 (YSEN…QISD) and 1101-1111 (PENNSSHNIVP). Positions 1178–1212 (KKRSLEDNETEIKVSRDTWNTKNMRSLEPPRSKKR) match the Bipartite nuclear localization signal motif. The Reverse transcriptase Ty1/copia-type domain maps to 1338-1476 (NNYYITQLDI…DILGLEIKYQ (139 aa)). Residues Asp1346, Asp1427, Asp1428, Asp1610, Glu1652, and Asp1685 each coordinate Mg(2+). The 143-residue stretch at 1610-1752 (DASYGNQPYY…IKTFKLLTNK (143 aa)) folds into the RNase H Ty1/copia-type domain.

In terms of assembly, the capsid protein forms a homotrimer, from which the VLPs are assembled. The protease is a homodimer, whose active site consists of two apposed aspartic acid residues. Post-translationally, initially, virus-like particles (VLPs) are composed of the structural unprocessed proteins Gag and Gag-Pol, and also contain the host initiator methionine tRNA (tRNA(i)-Met) which serves as a primer for minus-strand DNA synthesis, and a dimer of genomic Ty RNA. Processing of the polyproteins occurs within the particle and proceeds by an ordered pathway, called maturation. First, the protease (PR) is released by autocatalytic cleavage of the Gag-Pol polyprotein yielding capsid protein p45 and a Pol-p154 precursor protein. This cleavage is a prerequisite for subsequent processing of Pol-p154 at the remaining sites to release the mature structural and catalytic proteins. Maturation takes place prior to the RT reaction and is required to produce transposition-competent VLPs.

It is found in the cytoplasm. Its subcellular location is the nucleus. The catalysed reaction is DNA(n) + a 2'-deoxyribonucleoside 5'-triphosphate = DNA(n+1) + diphosphate. It catalyses the reaction Endonucleolytic cleavage to 5'-phosphomonoester.. Its function is as follows. Capsid protein (CA) is the structural component of the virus-like particle (VLP), forming the shell that encapsulates the retrotransposons dimeric RNA genome. The particles are assembled from trimer-clustered units and there are holes in the capsid shells that allow for the diffusion of macromolecules. CA also has nucleocapsid-like chaperone activity, promoting primer tRNA(i)-Met annealing to the multipartite primer-binding site (PBS), dimerization of Ty1 RNA and initiation of reverse transcription. The aspartyl protease (PR) mediates the proteolytic cleavages of the Gag and Gag-Pol polyproteins after assembly of the VLP. In terms of biological role, reverse transcriptase/ribonuclease H (RT) is a multifunctional enzyme that catalyzes the conversion of the retro-elements RNA genome into dsDNA within the VLP. The enzyme displays a DNA polymerase activity that can copy either DNA or RNA templates, and a ribonuclease H (RNase H) activity that cleaves the RNA strand of RNA-DNA heteroduplexes during plus-strand synthesis and hydrolyzes RNA primers. The conversion leads to a linear dsDNA copy of the retrotransposon that includes long terminal repeats (LTRs) at both ends. Functionally, integrase (IN) targets the VLP to the nucleus, where a subparticle preintegration complex (PIC) containing at least integrase and the newly synthesized dsDNA copy of the retrotransposon must transit the nuclear membrane. Once in the nucleus, integrase performs the integration of the dsDNA into the host genome. The chain is Transposon Ty1-PR1 Gag-Pol polyprotein (TY1B-PR1) from Saccharomyces cerevisiae (strain ATCC 204508 / S288c) (Baker's yeast).